Consider the following 66-residue polypeptide: Large ribosomal subunit protein uL29 (66 aa).

The protein belongs to the universal ribosomal protein uL29 family.

The chain is Large ribosomal subunit protein uL29 from Petrotoga mobilis (strain DSM 10674 / SJ95).